The following is a 426-amino-acid chain: Serine--tRNA ligase (426 aa).

Residue 230-232 coordinates L-serine; the sequence is TSE. 261–263 is an ATP binding site; it reads RSE. Glu284 serves as a coordination point for L-serine. An ATP-binding site is contributed by 348 to 351; the sequence is EISS. An L-serine-binding site is contributed by Ser384.

The protein belongs to the class-II aminoacyl-tRNA synthetase family. Type-1 seryl-tRNA synthetase subfamily. As to quaternary structure, homodimer. The tRNA molecule binds across the dimer.

Its subcellular location is the cytoplasm. The enzyme catalyses tRNA(Ser) + L-serine + ATP = L-seryl-tRNA(Ser) + AMP + diphosphate + H(+). It catalyses the reaction tRNA(Sec) + L-serine + ATP = L-seryl-tRNA(Sec) + AMP + diphosphate + H(+). It functions in the pathway aminoacyl-tRNA biosynthesis; selenocysteinyl-tRNA(Sec) biosynthesis; L-seryl-tRNA(Sec) from L-serine and tRNA(Sec): step 1/1. Catalyzes the attachment of serine to tRNA(Ser). Is also able to aminoacylate tRNA(Sec) with serine, to form the misacylated tRNA L-seryl-tRNA(Sec), which will be further converted into selenocysteinyl-tRNA(Sec). The protein is Serine--tRNA ligase of Sphingopyxis alaskensis (strain DSM 13593 / LMG 18877 / RB2256) (Sphingomonas alaskensis).